Reading from the N-terminus, the 212-residue chain is MEPLYQQTNKQVQEIQSHMGRLERADKQSVHLVENEIQASIEQIFSHLERLEILSSKEPLNRRQNAKLRVDQLKYDVQHLQTALRNFQHRRQVREQQERQRDELLSRTFTTNDSDTTIPMDESLQFNSSLHNIHHGMDDLIGGGHSILEGLRAQRLTLKGTQKKILDIANMLGLSNTVMRLIEKRAFQDKYFMIGGMLLTCAVMFLVVQYLT.

Methionine 1 is subject to N-acetylmethionine. Topologically, residues 1-190 (MEPLYQQTNK…LIEKRAFQDK (190 aa)) are cytoplasmic. Residues 60 to 92 (LNRRQNAKLRVDQLKYDVQHLQTALRNFQHRRQ) adopt a coiled-coil conformation. Positions 118-120 (IPM) match the IxM motif; signal for cargo packaging into COPII-coated vesicles motif. The helical; Anchor for type IV membrane protein transmembrane segment at 191–211 (YFMIGGMLLTCAVMFLVVQYL) threads the bilayer. Threonine 212 is a topological domain (vesicular).

This sequence belongs to the GOSR2 family. In terms of assembly, part of a unique SNARE complex composed of the Golgi SNAREs GOSR1, STX5 and YKT6. Interacts with BET1.

The protein resides in the golgi apparatus. The protein localises to the cis-Golgi network membrane. It is found in the golgi apparatus membrane. It localises to the endoplasmic reticulum membrane. Its function is as follows. Involved in transport of proteins from the cis/medial-Golgi to the trans-Golgi network. This chain is Golgi SNAP receptor complex member 2 (Gosr2), found in Mus musculus (Mouse).